A 358-amino-acid polypeptide reads, in one-letter code: Beta-lactamase (358 aa).

The active-site Acyl-ester intermediate is Ser-60. Tyr-146 (proton acceptor) is an active-site residue. 311-313 is a binding site for substrate; sequence KTG.

This sequence belongs to the class-C beta-lactamase family.

The protein localises to the periplasm. It catalyses the reaction a beta-lactam + H2O = a substituted beta-amino acid. This protein is a serine beta-lactamase with a substrate specificity for cephalosporins. In Pseudomonas fluorescens, this protein is Beta-lactamase.